Here is an 842-residue protein sequence, read N- to C-terminus: Pentatricopeptide repeat-containing protein At3g23020 (842 aa).

The tract at residues 40–61 is disordered; that stretch reads YVPGTHESDKGPQRSTRNGDRG. A compositionally biased stretch (basic and acidic residues) spans 45–59; that stretch reads HESDKGPQRSTRNGD. 18 PPR repeats span residues 186 to 220, 221 to 255, 256 to 290, 297 to 331, 332 to 362, 366 to 400, 401 to 435, 436 to 470, 474 to 500, 504 to 538, 539 to 573, 574 to 608, 609 to 643, 644 to 674, 682 to 712, 716 to 750, 751 to 785, and 786 to 820; these read NVIH…GIKP, INST…GMQP, DEVT…ENKA, SSYT…GIVP, TTVT…MKLH, DTRT…GLKP, DPVS…NVEI, DEYT…GNMS, YSAN…CQEV, TVIE…GVTP, DKCT…GYVS, DCIP…NIEP, DVVV…GIPG, NSVI…LLQS, DVYT…MKQR, NEFT…KILT, DPLS…GIQP, and DDST…EIKR.

Belongs to the PPR family. P subfamily.

The chain is Pentatricopeptide repeat-containing protein At3g23020 from Arabidopsis thaliana (Mouse-ear cress).